The sequence spans 277 residues: Undecaprenyl-diphosphatase (277 aa).

Helical transmembrane passes span 85-105 (VNIV…AGAI), 109-129 (LFAP…ILWV), 188-208 (ATEF…VYSV), 218-238 (ADIP…FLCV), and 256-276 (YRIG…VVWA).

The protein belongs to the UppP family.

Its subcellular location is the cell inner membrane. The catalysed reaction is di-trans,octa-cis-undecaprenyl diphosphate + H2O = di-trans,octa-cis-undecaprenyl phosphate + phosphate + H(+). Its function is as follows. Catalyzes the dephosphorylation of undecaprenyl diphosphate (UPP). Confers resistance to bacitracin. This Herminiimonas arsenicoxydans protein is Undecaprenyl-diphosphatase.